Consider the following 365-residue polypeptide: DNA replication and repair protein RecF (365 aa).

An ATP-binding site is contributed by 30–37 (GQNGSGKT).

The protein belongs to the RecF family.

It is found in the cytoplasm. In terms of biological role, the RecF protein is involved in DNA metabolism; it is required for DNA replication and normal SOS inducibility. RecF binds preferentially to single-stranded, linear DNA. It also seems to bind ATP. The sequence is that of DNA replication and repair protein RecF from Shewanella halifaxensis (strain HAW-EB4).